A 535-amino-acid chain; its full sequence is Probable deoxycholate-binding periplasmic protein YgiS (535 aa).

Residues 1 to 20 (MYTRNLLWLVSLVSAAPLYA) form the signal peptide.

It belongs to the bacterial solute-binding protein 5 family.

It localises to the periplasm. Its function is as follows. Probably part of a deoxycholate transport system. Its expression in the presence of deoxycholate in a ygiS deletion mutant increases intracellular deoxycholate levels and decreases cell growth; higher expression in the presence of deoxycholate inhibits cell growth completely. Bile acid detergents such as deoxycholate are important for host defense against bacterial growth in the gall bladder and duodenum. This Escherichia coli (strain K12) protein is Probable deoxycholate-binding periplasmic protein YgiS (ygiS).